Here is a 353-residue protein sequence, read N- to C-terminus: N-methyltransferase (353 aa).

Residues S171, A195, D218, D238, and K252 each contribute to the S-adenosyl-L-homocysteine site. S-adenosyl-L-methionine is bound at residue D218.

It belongs to the class I-like SAM-binding methyltransferase superfamily. Cation-independent O-methyltransferase family. Homodimer. In terms of tissue distribution, expressed at high levels in all tissues.

It carries out the reaction 3-methoxytyramine + S-adenosyl-L-methionine = N-methyl-3-methoxytyramine + S-adenosyl-L-homocysteine + H(+). It catalyses the reaction mescaline + S-adenosyl-L-methionine = N-methylmescaline + S-adenosyl-L-homocysteine + H(+). The catalysed reaction is tyramine + S-adenosyl-L-methionine = N-methyltyramine + S-adenosyl-L-homocysteine + H(+). The enzyme catalyses 4-hydroxy-3,5-dimethoxyphenethylamine + S-adenosyl-L-methionine = N-methyl-4-hydroxy-3,5-dimethoxyphenethylamine + S-adenosyl-L-homocysteine + H(+). Its pathway is aromatic compound metabolism. It participates in alkaloid biosynthesis. N-methyltransferase participating in the biosynthesis of natural products derived from phenylethylamine, including mescaline, a natural hallucinogen potentially used in psychotherapeutic treatments. Catalyzes the N-methylation of many substrates, including 3-methoxytyramine, 5-hydroxy-3,4-dimethoxyphenethylamine, 4-hydroxy-3,5-dimethoxyphenethylamine, tyramine and mescaline. The polypeptide is N-methyltransferase (Lophophora williamsii (Peyote)).